The sequence spans 748 residues: Peroxisomal membrane protein PEX14 (748 aa).

2 disordered regions span residues 1 to 138 and 190 to 228; these read MDND…LSPS and GNIN…NNNN. Over 1–277 the chain is Peroxisomal; that stretch reads MDNDDINNNN…IAQLMMNNNR (277 aa). Low complexity predominate over residues 7–30; that stretch reads NNNNNNNNNNNNNNNSQELDQQEQ. Positions 8-60 form a coiled coil; that stretch reads NNNNNNNNNNNNNNSQELDQQEQTQEEITKQRIQKRKEEAKRIMEERKKREQQ. Over residues 43–59 the composition is skewed to basic and acidic residues; sequence RKEEAKRIMEERKKREQ. Positions 86-104 are enriched in polar residues; sequence PQRQQQYDDNDEPPQQQQY. Composition is skewed to low complexity over residues 122–131, 190–209, and 218–228; these read TTSSTASAAT, GNIN…NSIS, and NNNNNSSNNNN. Positions 241–277 form a coiled coil; the sequence is QQHQQQQQMALTQIQSYQKRLEADDQRIAQLMMNNNR. Residues 278–300 traverse the membrane as a helical segment; it reads FSWNSFLFSVTAIVGAASGLAYL. At 301–748 the chain is on the cytoplasmic side; it reads TSNYIIPFLN…INNTDSSVEK (448 aa). Positions 316 to 413 form a coiled coil; it reads KDASANMDKK…IGNKENSNNS (98 aa). Disordered regions lie at residues 406–673 and 685–748; these read NKEN…ETPY and KQGK…SVEK. Composition is skewed to low complexity over residues 409–424 and 445–476; these read NSNN…NNNN and STNN…PGSN. Positions 510 to 527 are enriched in polar residues; that stretch reads SWQQKSSNPPSDLSNAND. Low complexity-rich tracts occupy residues 528 to 542 and 569 to 611; these read KSSP…PTKP and TTTT…NNNN. Residues 612 to 627 show a composition bias toward polar residues; sequence TTIASTSNESNNSKVE. Positions 628 to 661 are enriched in low complexity; it reads TTSNDSDKSTSPSSSSNNTTSTTATTTTITSAST. Residues 710-723 show a composition bias toward basic and acidic residues; it reads SAKERPKKPWERDT. The segment covering 724 to 748 has biased composition (polar residues); the sequence is LTSVTNNLSVEETQTINNTDSSVEK.

The protein belongs to the peroxin-14 family. Interacts with PEX13; forming the PEX13-PEX14 docking complex. Interacts with PEX5 (via WxxxF/Y motifs).

Its subcellular location is the peroxisome membrane. In terms of biological role, component of the PEX13-PEX14 docking complex, a translocon channel that specifically mediates the import of peroxisomal cargo proteins bound to PEX5 receptor. The PEX13-PEX14 docking complex forms a large import pore which can be opened to a diameter of about 9 nm. Mechanistically, PEX5 receptor along with cargo proteins associates with the PEX14 subunit of the PEX13-PEX14 docking complex in the cytosol, leading to the insertion of the receptor into the organelle membrane with the concomitant translocation of the cargo into the peroxisome matrix. The protein is Peroxisomal membrane protein PEX14 (pex14) of Dictyostelium discoideum (Social amoeba).